A 130-amino-acid polypeptide reads, in one-letter code: Holo-[acyl-carrier-protein] synthase (130 aa).

D9 and E58 together coordinate Mg(2+).

The protein belongs to the P-Pant transferase superfamily. AcpS family. It depends on Mg(2+) as a cofactor.

It is found in the cytoplasm. It catalyses the reaction apo-[ACP] + CoA = holo-[ACP] + adenosine 3',5'-bisphosphate + H(+). Functionally, transfers the 4'-phosphopantetheine moiety from coenzyme A to a Ser of acyl-carrier-protein. This chain is Holo-[acyl-carrier-protein] synthase, found in Mycolicibacterium paratuberculosis (strain ATCC BAA-968 / K-10) (Mycobacterium paratuberculosis).